Consider the following 2282-residue polypeptide: Protein Ycf2 (2282 aa).

ATP is bound at residue 1635–1642 (GSIGTGRS).

This sequence belongs to the Ycf2 family.

The protein resides in the plastid. The protein localises to the chloroplast stroma. Probable ATPase of unknown function. Its presence in a non-photosynthetic plant (Epifagus virginiana) and experiments in tobacco indicate that it has an essential function which is probably not related to photosynthesis. The protein is Protein Ycf2 of Populus alba (White poplar).